The chain runs to 558 residues: Vanin-like protein 1 (558 aa).

An N-terminal signal peptide occupies residues 1-22; the sequence is MSNTWWWLSVVLLILGLMPGMS. One can recognise a CN hydrolase domain in the interval 33 to 299; it reads YTAGVVEFKQ…RAIYVAQVPK (267 aa). Asparagine 65 carries N-linked (GlcNAc...) asparagine glycosylation. The active-site Proton acceptor is the glutamate 76. N-linked (GlcNAc...) asparagine glycosylation is found at asparagine 103, asparagine 120, and asparagine 128. Catalysis depends on lysine 171, which acts as the Proton donor. An N-linked (GlcNAc...) asparagine glycan is attached at asparagine 180. Residue cysteine 203 is the Nucleophile of the active site. N-linked (GlcNAc...) asparagine glycans are attached at residues asparagine 354 and asparagine 379. Residue serine 531 is the site of GPI-anchor amidated serine attachment. Residues 532–558 constitute a propeptide, removed in mature form; it reads GSPGLRILGGWLAMPLIILAIARTMSS.

This sequence belongs to the carbon-nitrogen hydrolase superfamily. BTD/VNN family. As to expression, expressed in larvae and early pupae. Expressed in third instar larvae.

It localises to the cell membrane. The protein is Vanin-like protein 1 of Drosophila melanogaster (Fruit fly).